Here is a 282-residue protein sequence, read N- to C-terminus: Protease HtpX homolog (282 aa).

2 consecutive transmembrane segments (helical) span residues 7-26 (TTVLLAALTALIIWIGGAVG) and 30-49 (GMMIAFVLALVMNVGSYWFS). H131 lines the Zn(2+) pocket. E132 is a catalytic residue. Zn(2+) is bound at residue H135. Transmembrane regions (helical) follow at residues 141–161 (ILVSSIAATLAGVVMILARMA) and 183–203 (LGLVVTAILAPIAAMLIQLAI). E208 contributes to the Zn(2+) binding site.

It belongs to the peptidase M48B family. Zn(2+) is required as a cofactor.

The protein localises to the cell inner membrane. This chain is Protease HtpX homolog, found in Syntrophobacter fumaroxidans (strain DSM 10017 / MPOB).